A 607-amino-acid polypeptide reads, in one-letter code: Albumin B (607 aa).

The first 18 residues, 1–18 (MKWITLICLLISSSFIES), serve as a signal peptide directing secretion. The propeptide occupies 19 to 24 (RILFKR). 3 consecutive Albumin domains span residues 22–209 (FKRD…KQLM), 210–402 (KQSH…RFMN), and 403–600 (EAKE…VLIE). A Cu cation-binding site is contributed by His30. 17 disulfides stabilise this stretch: Cys80/Cys88, Cys101/Cys117, Cys116/Cys127, Cys147/Cys192, Cys191/Cys200, Cys223/Cys269, Cys268/Cys276, Cys288/Cys302, Cys301/Cys312, Cys339/Cys384, Cys383/Cys392, Cys415/Cys461, Cys460/Cys471, Cys484/Cys500, Cys499/Cys510, Cys537/Cys582, and Cys581/Cys590.

It belongs to the ALB/AFP/VDB family. As to expression, plasma.

It is found in the secreted. Its function is as follows. Serum albumin, the main protein of plasma, has a good binding capacity for water, Ca(2+), Na(+), K(+), fatty acids, hormones, bilirubin and drugs. Its main function is the regulation of the colloidal osmotic pressure of blood. The polypeptide is Albumin B (alb-b) (Xenopus laevis (African clawed frog)).